A 342-amino-acid chain; its full sequence is S-adenosylmethionine:tRNA ribosyltransferase-isomerase (342 aa).

The protein belongs to the QueA family. As to quaternary structure, monomer.

Its subcellular location is the cytoplasm. The catalysed reaction is 7-aminomethyl-7-carbaguanosine(34) in tRNA + S-adenosyl-L-methionine = epoxyqueuosine(34) in tRNA + adenine + L-methionine + 2 H(+). Its pathway is tRNA modification; tRNA-queuosine biosynthesis. Functionally, transfers and isomerizes the ribose moiety from AdoMet to the 7-aminomethyl group of 7-deazaguanine (preQ1-tRNA) to give epoxyqueuosine (oQ-tRNA). The polypeptide is S-adenosylmethionine:tRNA ribosyltransferase-isomerase (Streptococcus pneumoniae serotype 4 (strain ATCC BAA-334 / TIGR4)).